The sequence spans 162 residues: Protein-export protein SecB (162 aa).

This sequence belongs to the SecB family. In terms of assembly, homotetramer, a dimer of dimers. One homotetramer interacts with 1 SecA dimer.

It is found in the cytoplasm. In terms of biological role, one of the proteins required for the normal export of preproteins out of the cell cytoplasm. It is a molecular chaperone that binds to a subset of precursor proteins, maintaining them in a translocation-competent state. It also specifically binds to its receptor SecA. The sequence is that of Protein-export protein SecB from Pseudomonas savastanoi pv. phaseolicola (strain 1448A / Race 6) (Pseudomonas syringae pv. phaseolicola (strain 1448A / Race 6)).